We begin with the raw amino-acid sequence, 357 residues long: Phenylalanine--tRNA ligase alpha subunit (357 aa).

Position 278 (E278) interacts with Mg(2+).

Belongs to the class-II aminoacyl-tRNA synthetase family. Phe-tRNA synthetase alpha subunit type 1 subfamily. In terms of assembly, tetramer of two alpha and two beta subunits. Requires Mg(2+) as cofactor.

It is found in the cytoplasm. The enzyme catalyses tRNA(Phe) + L-phenylalanine + ATP = L-phenylalanyl-tRNA(Phe) + AMP + diphosphate + H(+). The chain is Phenylalanine--tRNA ligase alpha subunit from Albidiferax ferrireducens (strain ATCC BAA-621 / DSM 15236 / T118) (Rhodoferax ferrireducens).